The following is a 324-amino-acid chain: Glycerol-3-phosphate dehydrogenase [NAD(P)+] (324 aa).

The NADPH site is built by F11, R31, and K107. The sn-glycerol 3-phosphate site is built by K107 and G135. A139 is an NADPH binding site. Sn-glycerol 3-phosphate contacts are provided by K190, D245, S255, R256, and N257. The Proton acceptor role is filled by K190. NADPH is bound at residue R256. NADPH contacts are provided by V278 and E279.

This sequence belongs to the NAD-dependent glycerol-3-phosphate dehydrogenase family.

It localises to the cytoplasm. The catalysed reaction is sn-glycerol 3-phosphate + NAD(+) = dihydroxyacetone phosphate + NADH + H(+). It carries out the reaction sn-glycerol 3-phosphate + NADP(+) = dihydroxyacetone phosphate + NADPH + H(+). The protein operates within membrane lipid metabolism; glycerophospholipid metabolism. Its function is as follows. Catalyzes the reduction of the glycolytic intermediate dihydroxyacetone phosphate (DHAP) to sn-glycerol 3-phosphate (G3P), the key precursor for phospholipid synthesis. The polypeptide is Glycerol-3-phosphate dehydrogenase [NAD(P)+] (Anaplasma phagocytophilum (strain HZ)).